The chain runs to 172 residues: Translationally-controlled tumor protein homolog (172 aa).

The TCTP domain maps to Met1 to Cys172. The residue at position 46 (Ser46) is a Phosphoserine; by PLK1.

It belongs to the TCTP family.

The protein resides in the cytoplasm. Functionally, involved in calcium binding and microtubule stabilization. The polypeptide is Translationally-controlled tumor protein homolog (TPT1) (Gallus gallus (Chicken)).